The chain runs to 89 residues: Glutamyl-tRNA(Gln) amidotransferase subunit C (89 aa).

This sequence belongs to the GatC family. As to quaternary structure, heterotrimer of A, B and C subunits.

It catalyses the reaction L-glutamyl-tRNA(Gln) + L-glutamine + ATP + H2O = L-glutaminyl-tRNA(Gln) + L-glutamate + ADP + phosphate + H(+). The catalysed reaction is L-aspartyl-tRNA(Asn) + L-glutamine + ATP + H2O = L-asparaginyl-tRNA(Asn) + L-glutamate + ADP + phosphate + 2 H(+). Allows the formation of correctly charged Asn-tRNA(Asn) or Gln-tRNA(Gln) through the transamidation of misacylated Asp-tRNA(Asn) or Glu-tRNA(Gln) in organisms which lack either or both of asparaginyl-tRNA or glutaminyl-tRNA synthetases. The reaction takes place in the presence of glutamine and ATP through an activated phospho-Asp-tRNA(Asn) or phospho-Glu-tRNA(Gln). This Thermus thermophilus (strain ATCC 27634 / DSM 579 / HB8) protein is Glutamyl-tRNA(Gln) amidotransferase subunit C.